A 394-amino-acid polypeptide reads, in one-letter code: Mucosal addressin cell adhesion molecule 1 (394 aa).

The first 19 residues, 1–19 (MEPILALLLALGPFQLSRG), serve as a signal peptide directing secretion. Ig-like domains follow at residues 20 to 107 (QSFQ…ILVY), 108 to 225 (AFPD…TSPE), and 256 to 345 (PSTP…YVTG). Residues 20–353 (QSFQVNPPEP…TGQVIPNPSS (334 aa)) lie on the Extracellular side of the membrane. The N-linked (GlcNAc...) asparagine glycan is linked to Asn-42. Disulfide bonds link Cys-43/Cys-89, Cys-47/Cys-93, and Cys-130/Cys-198. The interval 219–255 (QSQTSPEPPSTTSAKPYILTSSHTTKAVSTGLSSVAL) is mucin-like. Cys-282 and Cys-330 are joined by a disulfide. Residues 354–374 (MVALWIGSLVLGLLALAFLAY) form a helical membrane-spanning segment. Residues 375–394 (CLWKRYRPGPLPDSSSCTLL) lie on the Cytoplasmic side of the membrane.

In terms of assembly, homodimer. Detected in Peyer patches and mesenteric lymph nodes but not in spleen.

Its subcellular location is the membrane. Its function is as follows. Cell adhesion leukocyte receptor expressed by mucosal venules, helps to direct lymphocyte traffic into mucosal tissues including the Peyer patches and the intestinal lamina propria. It can bind both the integrin alpha-4/beta-7 and L-selectin, regulating both the passage and retention of leukocytes. The sequence is that of Mucosal addressin cell adhesion molecule 1 (Madcam1) from Rattus norvegicus (Rat).